The chain runs to 240 residues: Small ribosomal subunit protein uS3m (240 aa).

The protein belongs to the universal ribosomal protein uS3 family.

The protein localises to the mitochondrion. This Chondrus crispus (Carrageen Irish moss) protein is Small ribosomal subunit protein uS3m (RPS3).